The chain runs to 278 residues: Elongation factor Ts (278 aa).

The involved in Mg(2+) ion dislocation from EF-Tu stretch occupies residues 82 to 85; the sequence is TDFV.

The protein belongs to the EF-Ts family.

Its subcellular location is the cytoplasm. Functionally, associates with the EF-Tu.GDP complex and induces the exchange of GDP to GTP. It remains bound to the aminoacyl-tRNA.EF-Tu.GTP complex up to the GTP hydrolysis stage on the ribosome. In Streptomyces griseus subsp. griseus (strain JCM 4626 / CBS 651.72 / NBRC 13350 / KCC S-0626 / ISP 5235), this protein is Elongation factor Ts.